A 297-amino-acid chain; its full sequence is UDP-N-acetylenolpyruvoylglucosamine reductase (297 aa).

The region spanning 18-184 (QVGGPAEWYL…LSARLRLAPG (167 aa)) is the FAD-binding PCMH-type domain. Arg163 is an active-site residue. Residue Ser214 is the Proton donor of the active site. Glu285 is an active-site residue.

The cofactor is FAD.

Its subcellular location is the cytoplasm. The enzyme catalyses UDP-N-acetyl-alpha-D-muramate + NADP(+) = UDP-N-acetyl-3-O-(1-carboxyvinyl)-alpha-D-glucosamine + NADPH + H(+). It functions in the pathway cell wall biogenesis; peptidoglycan biosynthesis. In terms of biological role, cell wall formation. The chain is UDP-N-acetylenolpyruvoylglucosamine reductase from Gloeobacter violaceus (strain ATCC 29082 / PCC 7421).